The primary structure comprises 160 residues: F-box protein At1g15015 (160 aa).

The region spanning 1–44 is the F-box domain; the sequence is MDVTLPHHVVEDILERLPVKTLRKFKCVCSTWRSTIDSQRFKDR.

The sequence is that of F-box protein At1g15015 from Arabidopsis thaliana (Mouse-ear cress).